The chain runs to 618 residues: MASLQQSRIQSYLEKNKIGPLFEEMMTKLITETPDHPIPFLIGHLQTKQESPGRIQRTLSGSAALWAEGSSEYKGTRRDSRGYEKPWQIHPKKPKKSKSDLAVSNISPPSPESKSLPRSILRPTWDWRTKPESRGFDELNHILLESKKLGKALENLSRSIAVSDDFDLDPRAYNSVLRPRVVGEWVGREEEDLDPLAAEMFQPPVPRAKTEGWTSKDNSPVGSLKMETKGKGLKQQQQNHKKLLAAMLSQDSFDSMPDSAPSVTEDEMEDEDDAMELLEDLDDLRMEGVTGLLQSGSKFSQGRSSYYTEPQAKVTLNICSRCARLQGDSLTARTEEEPERHVPEQAVPEVPCPLPTVTETLTATEDLQTASQVTGLRHPVWASDVKPIRGTSPQTARRALQLQDSLFSKELENMGKHLAEVEKDLAKLAEQGKLNRSPNSPHRSLLLPPLFHTTNTLPVLGQTSRPQSPSSLSSKTTGLPLHNPKPTSLMTDRTSPSNSSSRAQTPSRPITPNSLMMRSFTAAGHGNKERVYGRSRSRPVTPTGQITRPILTPPGLSTTDLYGGLWSTLTEDEFYQQLQAVRKPWRIPSDAESDCLDPPEQDKCEFYTSDPSHSLKTL.

4 disordered regions span residues 70–118, 330–352, 456–552, and 587–618; these read SSEY…SLPR, LTARTEEEPERHVPEQAVPEVPC, TLPV…PILT, and IPSDAESDCLDPPEQDKCEFYTSDPSHSLKTL. 2 stretches are compositionally biased toward basic and acidic residues: residues 74-84 and 333-343; these read KGTRRDSRGYE and RTEEEPERHVP. Low complexity predominate over residues 463–481; the sequence is TSRPQSPSSLSSKTTGLPL. Polar residues-rich tracts occupy residues 485-516 and 609-618; these read KPTSLMTDRTSPSNSSSRAQTPSRPITPNSLM and SDPSHSLKTL.

This is an uncharacterized protein from Danio rerio (Zebrafish).